Reading from the N-terminus, the 192-residue chain is MDGSGEQLGSGGPTSSEQIMKTGAFLLQGFIQDRAGRMAGETPELTLEQPPQDASTKKLSECLRRIGDELDSNMELQRMIADVDTDSPREVFFRVAADMFADGNFNWGRVVALFYFASKLVLKALCTKVPELIRTIMGWTLDFLRERLLVWIQDQGGWEGLLSYFGTPTWQTVTIFVAGVLTASLTIWKKMG.

Methionine 1 is modified (N-acetylmethionine). A BH3 motif is present at residues 59–73 (LSECLRRIGDELDSN). The BH1 motif lies at 98–118 (DMFADGNFNWGRVVALFYFAS). Lysine 128 is covalently cross-linked (Glycyl lysine isopeptide (Lys-Gly) (interchain with G-Cter in ubiquitin)). The BH2 motif lies at 150 to 165 (VWIQDQGGWEGLLSYF). The helical transmembrane segment at 172-192 (TVTIFVAGVLTASLTIWKKMG) threads the bilayer. Lysine 190 is covalently cross-linked (Glycyl lysine isopeptide (Lys-Gly) (interchain with G-Cter in ubiquitin)).

The protein belongs to the Bcl-2 family. In terms of assembly, homodimer. Forms higher oligomers under stress conditions. Forms heterooligomers with BAK. Interacts with BCL2L11. Interaction with BCL2L11 promotes BAX oligomerization and association with mitochondrial membranes, with subsequent release of cytochrome c. Forms heterodimers with BCL2. Forms heterodimers with BCL2L1 isoform Bcl-X(L), BCL2L2, MCL1 and A1. Interacts with SH3GLB1. Interacts with SFN and YWHAZ; the interaction occurs in the cytoplasm. Under stress conditions, JNK-mediated phosphorylation of SFN and YWHAZ, releases BAX to mitochondria. Interacts with RNF144B, which regulates the ubiquitin-dependent stability of BAX. Interacts with CLU under stress conditions that cause a conformation change leading to BAX oligomerization and association with mitochondria. Does not interact with CLU in unstressed cells. Interacts with FAIM2/LFG2. Interacts with BOP. Interacts (via a C-terminal 33 residues) with NOL3 (via CARD domain); inhibits BAX activation and translocationand consequently cytochrome c release from mitochondria. Interacts with GIMAP3/IAN4 and GIMAP5/IAN5; this interaction is increased, when cells initiate apoptosis upon IL2 withdrawal. Interacts with IRF3; the interaction is direct and, upon virus infection, mediates the formation of the apoptosis complex TOMM70:HSP90AA1:IRF3:BAX. Interacts with MOAP1, facilitating BAX-dependent mitochondrial outer membrane permeabilization and apoptosis. Interacts with BCL2L10/BCL-B. Interacts with non-acetylated XRCC6/Ku70; this interaction leads to BAX sequestration in the cytosol, away from the mitochondria, preventing BAX-mediated apoptosis. (Microbial infection) Interacts with gamma-herpesvirus 68 protein vBCL2. Ubiquitinated in the absence of XRCC6/Ku70. Ubiquitinated on Lys-128 and Lys-190. 'Lys-63'-linked polyubiquitin chains on Lys-128 are removed by USP12. In terms of tissue distribution, expressed in a wide variety of tissues.

Its subcellular location is the mitochondrion outer membrane. The protein localises to the cytoplasm. It is found in the nucleus. Accelerates programmed cell death by binding to, and antagonizing the apoptosis repressor BCL2 or its adenovirus homolog E1B 19k protein. Under stress conditions, undergoes a conformation change that causes translocation to the mitochondrion membrane, leading to the release of cytochrome c that then triggers apoptosis. Promotes activation of CASP3, and thereby apoptosis. BAX deficiency leads to lymphoid hyperplasia and male sterility, because of the cessation of sperm production. The protein is Apoptosis regulator BAX (Bax) of Mus musculus (Mouse).